Here is a 192-residue protein sequence, read N- to C-terminus: EF-hand protein 5 (192 aa).

The tract at residues 1–36 (MKDKAPVSSQQDHFSRGGAVGGKPISDVRGTSRPFY) is disordered. EF-hand domains follow at residues 46–80 (AELAEGFRVLSNGQKTISIPMKEVSALMASVGLHL), 81–118 (SDEEFHEVMRVFGQGEQTNTEELSFKDFLSLMMCEVDD), 119–154 (TMLEEMRGAFLHYDKQKTGFVTKKQFTELFATGGEC), and 155–190 (STPEEVEELLTIAEQDETDDKIDYNRFINELIHRLN). Ca(2+)-binding residues include threonine 100, glutamate 102, aspartate 107, aspartate 132, and threonine 136.

The sequence is that of EF-hand protein 5 from Trypanosoma brucei brucei.